Consider the following 392-residue polypeptide: 4-hydroxybenzoate polyprenyltransferase, mitochondrial (392 aa).

The N-terminal 22 residues, 1 to 22 (MYALRHLRLQSARHFRSSYAAA), are a transit peptide targeting the mitochondrion. The next 9 helical transmembrane spans lie at 90–110 (IGTY…ADAG), 115–135 (LTML…GCTI), 163–183 (FDAI…LVQL), 184–204 (NWQS…YPLM), 207–227 (VTYW…LLGW), 236–256 (LAAC…YDTI), 283–303 (VWLS…GWAC), 307–327 (VPYY…IYSL), and 339–359 (FISN…GTLL). The tract at residues 365 to 392 (KKQRQSSLTTSTASSYVPALPQKPEVLS) is disordered. Residues 369–379 (QSSLTTSTASS) show a composition bias toward polar residues.

It belongs to the UbiA prenyltransferase family. It depends on Mg(2+) as a cofactor.

It localises to the mitochondrion inner membrane. It carries out the reaction an all-trans-polyprenyl diphosphate + 4-hydroxybenzoate = a 4-hydroxy-3-(all-trans-polyprenyl)benzoate + diphosphate. It participates in cofactor biosynthesis; ubiquinone biosynthesis. Its function is as follows. Catalyzes the prenylation of para-hydroxybenzoate (PHB) with an all-trans polyprenyl group. Mediates the second step in the final reaction sequence of coenzyme Q (CoQ) biosynthesis, which is the condensation of the polyisoprenoid side chain with PHB, generating the first membrane-bound Q intermediate. The polypeptide is 4-hydroxybenzoate polyprenyltransferase, mitochondrial (Drosophila melanogaster (Fruit fly)).